We begin with the raw amino-acid sequence, 332 residues long: Cytoplasmic phosphatidylinositol transfer protein 1 (332 aa).

A phosphoserine mark is found at Ser119, Ser122, Ser270, and Ser274. The span at 272-281 (PSSAPSTPLS) shows a compositional bias: low complexity. Residues 272-332 (PSSAPSTPLS…SEKPCRPKSE (61 aa)) form a disordered region. Thr278 carries the post-translational modification Phosphothreonine.

It belongs to the PtdIns transfer protein family. PI transfer class IIB subfamily. As to expression, widely expressed in brain, with expression in the gray matters of pre- and postnatal brains. In terms of tissue distribution, weakly expressed in brain and is rather confined to the embryonic stage.

It is found in the cytoplasm. It localises to the nucleus. The enzyme catalyses a 1,2-diacyl-sn-glycero-3-phospho-(1D-myo-inositol)(in) = a 1,2-diacyl-sn-glycero-3-phospho-(1D-myo-inositol)(out). The catalysed reaction is a 1,2-diacyl-sn-glycero-3-phosphate(in) = a 1,2-diacyl-sn-glycero-3-phosphate(out). Functionally, catalyzes the transfer of phosphatidylinositol (PI) and phosphatidic acid (PA) between membranes. Binds PA derived from the phospholipase D signaling pathway and among the cellular PA species, preferably binds to the C16:0/16:1 and C16:1/18:1 PA species. Specifically binds to phosphatidylinositol but not to other phospholipids and may play a role in the phosphoinositide-mediated signaling in the neural development. This Mus musculus (Mouse) protein is Cytoplasmic phosphatidylinositol transfer protein 1 (Pitpnc1).